We begin with the raw amino-acid sequence, 565 residues long: Deformed epidermal autoregulatory factor 1 homolog (565 aa).

Disordered stretches follow at residues 34-62 (GGEA…ETPR) and 162-190 (GLKG…KGGT). The span at 169–181 (PLTPGPQSPPTPL) shows a compositional bias: pro residues. T171 is modified (phosphothreonine). S176 bears the Phosphoserine mark. At T179 the chain carries Phosphothreonine. One can recognise an SAND domain in the interval 193–273 (NWDPSVYDSE…QCLIQDGILN (81 aa)). Positions 301-316 (KRRKKENELPTTPVKK) match the Nuclear localization signal motif. The segment at 403–478 (IAPFPEAALP…QLKTLFEQAK (76 aa)) is interaction with LMO4. T432 carries the phosphothreonine modification. S448 is modified (phosphoserine). 8 residues coordinate Zn(2+): C504, C507, C515, C518, C524, C528, H536, and C540. The MYND-type zinc-finger motif lies at 504 to 540 (CVNCGREAMSECTGCHKVNYCSTFCQRKDWKDHQHIC).

As to quaternary structure, homodimer. Isoform 1 and isoform 4 may form a heterodimer. Interacts with LMO2 and CLIM2. Interacts with LMO4; LMO4 blocks export from nucleus. May interact with the corepressors NCOR1 and NCRO2. Identified in a complex with the XRCC5 and XRCC6 heterodimer. Interacts (via the SAND domain) with the DNA-PK complex subunit XRCC6; the interaction is direct and may be inhibited by DNA-binding. May be phosphorylated by DNA-PK complex in a DNA independent manner (in vitro). In terms of tissue distribution, expressed in various tissues and cells such as in peripheral mononuclear cells and hormone-secreting pituitary cells. Expression in pancreatic lymph nodes of patients with type 1 diabetes is 20 times higher than in healthy controls. Highly expressed in fetal and adult brain.

The protein resides in the nucleus. Its subcellular location is the cytoplasm. The protein localises to the secreted. In terms of biological role, transcription factor that binds to sequence with multiple copies of 5'-TTC[CG]G-3' present in its own promoter and that of the HNRPA2B1 gene. Down-regulates transcription of these genes. Binds to the retinoic acid response element (RARE) 5'-AGGGTTCACCGAAAGTTCA-3'. Activates the proenkephalin gene independently of promoter binding, probably through protein-protein interaction. When secreted, behaves as an inhibitor of cell proliferation, by arresting cells in the G0 or G1 phase. Required for neural tube closure and skeletal patterning. Regulates epithelial cell proliferation and side-branching in the mammary gland. Controls the expression of peripheral tissue antigens in pancreatic lymph nodes. Isoform 1 displays greater transcriptional activity than isoform 4. Isoform 4 may inhibit transcriptional activity of isoform 1 by interacting with isoform 1 and retaining it in the cytoplasm. Transcriptional activator of EIF4G3. The polypeptide is Deformed epidermal autoregulatory factor 1 homolog (DEAF1) (Homo sapiens (Human)).